The following is a 382-amino-acid chain: Lactaldehyde reductase (382 aa).

Residues Asp-38, Asn-70, 97 to 98 (GS), 139 to 143 (TTAGT), Asn-150, Lys-161, and 180 to 184 (MMDGM) contribute to the NAD(+) site. Positions 195, 199, 262, and 276 each coordinate Fe cation.

The protein belongs to the iron-containing alcohol dehydrogenase family. Homodimer. It depends on Fe cation as a cofactor.

The catalysed reaction is (R)-propane-1,2-diol + NAD(+) = (R)-lactaldehyde + NADH + H(+). The enzyme catalyses (S)-propane-1,2-diol + NAD(+) = (S)-lactaldehyde + NADH + H(+). It participates in carbohydrate degradation; L-fucose degradation. The polypeptide is Lactaldehyde reductase (fucO) (Escherichia coli O157:H7).